The following is a 445-amino-acid chain: CBL-interacting serine/threonine-protein kinase 5 (445 aa).

The Protein kinase domain maps to 12–267; that stretch reads YEMGRLLGKG…IPAIMRTPWL (256 aa). Residues 18-26 and Lys41 each bind ATP; that span reads LGKGTFAKV. The active-site Proton acceptor is the Asp135. The tract at residues 153-182 is activation loop; the sequence is DFGLSALPEQILQDGLLHTQCGTPAYVAPE. Residue Ser157 is modified to Phosphoserine. Thr171 is modified (phosphothreonine). Positions 307–332 constitute an NAF domain; sequence ISPKFFNAFEFISSMSSGFDLSSLFE. Residues 336–366 form a PPI region; that stretch reads KVQSVFTSRSSATEVMEKIETVTKEMNMKVK.

It belongs to the protein kinase superfamily. CAMK Ser/Thr protein kinase family. SNF1 subfamily. It depends on Mn(2+) as a cofactor.

The enzyme catalyses L-seryl-[protein] + ATP = O-phospho-L-seryl-[protein] + ADP + H(+). The catalysed reaction is L-threonyl-[protein] + ATP = O-phospho-L-threonyl-[protein] + ADP + H(+). In terms of biological role, CIPK serine-threonine protein kinases interact with CBL proteins. Binding of a CBL protein to the regulatory NAF domain of CIPK protein lead to the activation of the kinase in a calcium-dependent manner. The polypeptide is CBL-interacting serine/threonine-protein kinase 5 (CIPK5) (Arabidopsis thaliana (Mouse-ear cress)).